A 425-amino-acid chain; its full sequence is Enolase (425 aa).

Glutamine 163 contacts (2R)-2-phosphoglycerate. Glutamate 205 serves as the catalytic Proton donor. Positions 242, 286, and 313 each coordinate Mg(2+). Residues lysine 338, arginine 367, serine 368, and lysine 389 each contribute to the (2R)-2-phosphoglycerate site. Catalysis depends on lysine 338, which acts as the Proton acceptor.

Belongs to the enolase family. The cofactor is Mg(2+).

The protein localises to the cytoplasm. It localises to the secreted. The protein resides in the cell surface. The enzyme catalyses (2R)-2-phosphoglycerate = phosphoenolpyruvate + H2O. Its pathway is carbohydrate degradation; glycolysis; pyruvate from D-glyceraldehyde 3-phosphate: step 4/5. Its function is as follows. Catalyzes the reversible conversion of 2-phosphoglycerate (2-PG) into phosphoenolpyruvate (PEP). It is essential for the degradation of carbohydrates via glycolysis. In Lactobacillus delbrueckii subsp. bulgaricus (strain ATCC 11842 / DSM 20081 / BCRC 10696 / JCM 1002 / NBRC 13953 / NCIMB 11778 / NCTC 12712 / WDCM 00102 / Lb 14), this protein is Enolase.